A 301-amino-acid chain; its full sequence is NAD kinase 2 (301 aa).

The active-site Proton acceptor is D77. NAD(+) is bound by residues 77 to 78 (DG), R82, 151 to 152 (NE), K162, D181, and 192 to 197 (TAYAFS).

Belongs to the NAD kinase family. A divalent metal cation serves as cofactor.

The protein resides in the cytoplasm. The enzyme catalyses NAD(+) + ATP = ADP + NADP(+) + H(+). Involved in the regulation of the intracellular balance of NAD and NADP, and is a key enzyme in the biosynthesis of NADP. Catalyzes specifically the phosphorylation on 2'-hydroxyl of the adenosine moiety of NAD to yield NADP. The polypeptide is NAD kinase 2 (Streptomyces coelicolor (strain ATCC BAA-471 / A3(2) / M145)).